The primary structure comprises 379 residues: Ribosomal RNA large subunit methyltransferase G (379 aa).

This sequence belongs to the methyltransferase superfamily. RlmG family.

The protein resides in the cytoplasm. It catalyses the reaction guanosine(1835) in 23S rRNA + S-adenosyl-L-methionine = N(2)-methylguanosine(1835) in 23S rRNA + S-adenosyl-L-homocysteine + H(+). Its function is as follows. Specifically methylates the guanine in position 1835 (m2G1835) of 23S rRNA. The protein is Ribosomal RNA large subunit methyltransferase G of Serratia proteamaculans (strain 568).